The primary structure comprises 122 residues: Large ribosomal subunit protein uL18 (122 aa).

The protein belongs to the universal ribosomal protein uL18 family. As to quaternary structure, part of the 50S ribosomal subunit; part of the 5S rRNA/L5/L18/L25 subcomplex. Contacts the 5S and 23S rRNAs.

In terms of biological role, this is one of the proteins that bind and probably mediate the attachment of the 5S RNA into the large ribosomal subunit, where it forms part of the central protuberance. The protein is Large ribosomal subunit protein uL18 of Kosmotoga olearia (strain ATCC BAA-1733 / DSM 21960 / TBF 19.5.1).